The sequence spans 185 residues: Ribosome-recycling factor (185 aa).

Belongs to the RRF family.

The protein localises to the cytoplasm. Responsible for the release of ribosomes from messenger RNA at the termination of protein biosynthesis. May increase the efficiency of translation by recycling ribosomes from one round of translation to another. This chain is Ribosome-recycling factor, found in Geotalea daltonii (strain DSM 22248 / JCM 15807 / FRC-32) (Geobacter daltonii).